The chain runs to 582 residues: Membrane-bound O-acyltransferase GUP1 (582 aa).

At 1 to 61 the chain is on the extracellular side; that stretch reads MVIPRYHLIP…IIKQANPKSR (61 aa). A helical transmembrane segment spans residues 62-82; that stretch reads WSTIEFKFYYLVFLIIVPLMF. At 83–121 the chain is on the cytoplasmic side; that stretch reads KAGMESANENNPNYPKYEHLLSNGWIFGRKVDNSDQQYR. A helical transmembrane segment spans residues 122 to 144; the sequence is FFRNNFPLLCLLIIIHVGLRRVI. Residues 145–158 are Extracellular-facing; it reads NRIIPLSSKRTYFD. Residues 159–179 traverse the membrane as a helical segment; sequence FIFGIIFLIGAHGVNVLKLSI. At 180 to 195 the chain is on the cytoplasmic side; the sequence is HLLINYLIGKYIKNYK. Residues 196–216 form a helical membrane-spanning segment; sequence LSLWITWIYGISSLFFNEWYG. Residues 217–294 are Extracellular-facing; the sequence is NYTLGLSFLS…TAPLPIEDYN (78 aa). Residues 295–315 traverse the membrane as a helical segment; the sequence is IFNYISYLTYTPLFIAGPILT. Over 316–343 the chain is Cytoplasmic; sequence FNDYIYQSNYQQSSSTKDYHRIMMYLIR. The helical transmembrane segment at 344–364 threads the bilayer; that stretch reads FIFCLLTLEFILHFMYVVAAS. Residues 365 to 373 lie on the Extracellular side of the membrane; sequence KTKSWEGNL. A helical transmembrane segment spans residues 374 to 394; the sequence is PFQISMLGMFNLNIIWLKLLI. At 395 to 454 the chain is on the cytoplasmic side; sequence PWRLFRLWSLLDGIDPPENMIRCMDNNFSALAFWRAWHRSYNRWIIRYIYLPMGGGGKYR. 2 consecutive transmembrane segments (helical) span residues 455–475 and 476–496; these read ILNS…ELKL and LMWG…TMIF. Residue His469 is part of the active site. The Cytoplasmic segment spans residues 497-507; that stretch reads KKYRNQWWYRH. A helical membrane pass occupies residues 508-528; that stretch reads LCGVGAVINIWMMMIANLVGF. Over 529–548 the chain is Extracellular; that stretch reads CLGTDGMWKLLHDLFKTFDG. A helical transmembrane segment spans residues 549 to 569; the sequence is VRFLIISSGALFVGAQIMFEI. The Cytoplasmic segment spans residues 570–582; the sequence is RESEMRKGINVRC.

This sequence belongs to the membrane-bound acyltransferase family.

It is found in the cell membrane. It localises to the endoplasmic reticulum membrane. The protein localises to the mitochondrion membrane. Its function is as follows. Membrane-bound O-acyltransferase involved in the remodeling of glycosylphosphatidylinositol (GPI) anchors. Acts only on GPI-anchored proteins, but not on free GPI lipids. Also involved in lipid metabolism, having profound effects on sphingolipid-sterol-ordered domains integrity and assembly. Involved in cell integrity and apoptosis. In Candida tropicalis (Yeast), this protein is Membrane-bound O-acyltransferase GUP1 (GUP1).